Reading from the N-terminus, the 893-residue chain is DNA mismatch repair protein MutS (893 aa).

638-645 contributes to the ATP binding site; the sequence is GPNMAGKS.

It belongs to the DNA mismatch repair MutS family.

This protein is involved in the repair of mismatches in DNA. It is possible that it carries out the mismatch recognition step. This protein has a weak ATPase activity. The sequence is that of DNA mismatch repair protein MutS from Lawsonia intracellularis (strain PHE/MN1-00).